A 190-amino-acid chain; its full sequence is Putative 3-methyladenine DNA glycosylase (190 aa).

Belongs to the DNA glycosylase MPG family.

The chain is Putative 3-methyladenine DNA glycosylase from Chlamydia abortus (strain DSM 27085 / S26/3) (Chlamydophila abortus).